Here is a 189-residue protein sequence, read N- to C-terminus: Large ribosomal subunit protein bL9 (189 aa).

It belongs to the bacterial ribosomal protein bL9 family.

Functionally, binds to the 23S rRNA. The protein is Large ribosomal subunit protein bL9 of Brucella anthropi (strain ATCC 49188 / DSM 6882 / CCUG 24695 / JCM 21032 / LMG 3331 / NBRC 15819 / NCTC 12168 / Alc 37) (Ochrobactrum anthropi).